We begin with the raw amino-acid sequence, 491 residues long: Probable glycine dehydrogenase (decarboxylating) subunit 2 (491 aa).

N6-(pyridoxal phosphate)lysine is present on K264.

The protein belongs to the GcvP family. C-terminal subunit subfamily. As to quaternary structure, the glycine cleavage system is composed of four proteins: P, T, L and H. In this organism, the P 'protein' is a heterodimer of two subunits. Pyridoxal 5'-phosphate is required as a cofactor.

The catalysed reaction is N(6)-[(R)-lipoyl]-L-lysyl-[glycine-cleavage complex H protein] + glycine + H(+) = N(6)-[(R)-S(8)-aminomethyldihydrolipoyl]-L-lysyl-[glycine-cleavage complex H protein] + CO2. The glycine cleavage system catalyzes the degradation of glycine. The P protein binds the alpha-amino group of glycine through its pyridoxal phosphate cofactor; CO(2) is released and the remaining methylamine moiety is then transferred to the lipoamide cofactor of the H protein. In Coxiella burnetii (strain CbuK_Q154) (Coxiella burnetii (strain Q154)), this protein is Probable glycine dehydrogenase (decarboxylating) subunit 2.